The chain runs to 548 residues: Undecaprenyl phosphate-alpha-4-amino-4-deoxy-L-arabinose arabinosyl transferase 1 (548 aa).

12 consecutive transmembrane segments (helical) span residues 11 to 31 (WLLF…TRLL), 89 to 109 (IVVV…AMVV), 114 to 134 (ALAF…AIGT), 137 to 157 (ILDP…LVAL), 180 to 200 (FLTK…VMAI), 214 to 234 (IALL…ALQA), 263 to 283 (FYIP…FGAL), 292 to 312 (GTLY…ASKG), 314 to 334 (LLTY…HYIE), 347 to 367 (VNAS…IYSL), 382 to 402 (KIVL…GALF), and 405 to 425 (TQFL…YAIP).

This sequence belongs to the glycosyltransferase 83 family.

Its subcellular location is the cell inner membrane. The catalysed reaction is 4-amino-4-deoxy-alpha-L-arabinopyranosyl di-trans,octa-cis-undecaprenyl phosphate + lipid IVA = lipid IIA + di-trans,octa-cis-undecaprenyl phosphate.. The protein operates within lipopolysaccharide metabolism; 4-amino-4-deoxy-beta-L-arabinose-lipid A biosynthesis. Catalyzes the transfer of the L-Ara4N moiety of the glycolipid undecaprenyl phosphate-alpha-L-Ara4N to lipid A. The modified arabinose is attached to lipid A and is required for resistance to polymyxin and cationic antimicrobial peptides. The sequence is that of Undecaprenyl phosphate-alpha-4-amino-4-deoxy-L-arabinose arabinosyl transferase 1 from Proteus mirabilis (strain HI4320).